Reading from the N-terminus, the 226-residue chain is Orotate phosphoribosyltransferase (226 aa).

5-phospho-alpha-D-ribose 1-diphosphate-binding positions include R107, K108, K111, and 133 to 141 (EDLTTDGGS). T137 contacts orotate.

It belongs to the purine/pyrimidine phosphoribosyltransferase family. PyrE subfamily. Homodimer. The cofactor is Mg(2+).

It carries out the reaction orotidine 5'-phosphate + diphosphate = orotate + 5-phospho-alpha-D-ribose 1-diphosphate. It participates in pyrimidine metabolism; UMP biosynthesis via de novo pathway; UMP from orotate: step 1/2. Catalyzes the transfer of a ribosyl phosphate group from 5-phosphoribose 1-diphosphate to orotate, leading to the formation of orotidine monophosphate (OMP). This chain is Orotate phosphoribosyltransferase, found in Dinoroseobacter shibae (strain DSM 16493 / NCIMB 14021 / DFL 12).